The chain runs to 381 residues: Protein-glutamate methylesterase/protein-glutamine glutaminase 1 (381 aa).

The 119-residue stretch at 14 to 132 folds into the Response regulatory domain; it reads RVMLVDDSAV…DLAGGVDFKS (119 aa). 4-aspartylphosphate is present on Asp-65. The tract at residues 143-173 is disordered; it reads QARRAGARPARPGGPPATRPVIASTSPRTPV. Low complexity predominate over residues 144-153; the sequence is ARRAGARPAR. The CheB-type methylesterase domain occupies 188-381; that stretch reads PEPPDIIAIG…PWIMKLAARR (194 aa). Residues Ser-199, His-227, and Asp-323 contribute to the active site.

It belongs to the CheB family. Phosphorylated by CheA. Phosphorylation of the N-terminal regulatory domain activates the methylesterase activity.

Its subcellular location is the cytoplasm. The enzyme catalyses [protein]-L-glutamate 5-O-methyl ester + H2O = L-glutamyl-[protein] + methanol + H(+). It carries out the reaction L-glutaminyl-[protein] + H2O = L-glutamyl-[protein] + NH4(+). Its function is as follows. Involved in chemotaxis. Part of a chemotaxis signal transduction system that modulates chemotaxis in response to various stimuli. Catalyzes the demethylation of specific methylglutamate residues introduced into the chemoreceptors (methyl-accepting chemotaxis proteins or MCP) by CheR. Also mediates the irreversible deamidation of specific glutamine residues to glutamic acid. The polypeptide is Protein-glutamate methylesterase/protein-glutamine glutaminase 1 (Paramagnetospirillum magneticum (strain ATCC 700264 / AMB-1) (Magnetospirillum magneticum)).